The following is a 3135-amino-acid chain: Gametocyte surface protein P230 (3135 aa).

An N-terminal signal peptide occupies residues Met1–Ser20. Residues Asn76, Asn111, Asn135, and Asn239 are each glycosylated (N-linked (GlcNAc...) asparagine). The segment at Glu266–Phe470 is disordered. Acidic residues-rich tracts occupy residues Val276 to Leu321 and Val329 to Ser345. Over residues Val346–Glu358 the composition is skewed to basic and acidic residues. 2 stretches are compositionally biased toward acidic residues: residues Asp376–Tyr444 and Gly458–Gly467. Residue Asn585 is glycosylated (N-linked (GlcNAc...) asparagine). 6-Cys domains lie at Lys589–Tyr730 and Lys733–Glu887. 4 disulfides stabilise this stretch: Cys593–Cys611, Cys626–Cys706, Cys737–Cys781, and Cys804–Cys862. 7 N-linked (GlcNAc...) asparagine glycosylation sites follow: Asn821, Asn829, Asn889, Asn961, Asn1079, Asn1089, and Asn1153. 6-Cys domains are found at residues His918–Gln1133, Lys1136–Glu1275, Lys1285–Arg1432, and Lys1435–Leu1560. Intrachain disulfides connect Cys1140–Cys1161, Cys1175–Cys1251, and Cys1200–Cys1249. Residues Asn1267, Asn1300, Asn1452, Asn1492, Asn1508, Asn1621, and Asn1624 are each glycosylated (N-linked (GlcNAc...) asparagine). 3 cysteine pairs are disulfide-bonded: Cys1439-Cys1459, Cys1473-Cys1534, and Cys1483-Cys1532. 6-Cys domains are found at residues Asn1694 to Ser1907, Lys1910 to Asp2035, Asn2052 to Asn2199, and Ser2204 to Arg2374. 2 disulfide bridges follow: Cys1698–Cys1726 and Cys1740–Cys1881. Asn1753, Asn1804, Asn1882, Asn1920, Asn1954, and Asn1972 each carry an N-linked (GlcNAc...) asparagine glycan. Disulfide bonds link Cys1914-Cys1938, Cys1952-Cys2017, Cys1963-Cys2015, and Cys2056-Cys2074. 2 N-linked (GlcNAc...) asparagine glycosylation sites follow: Asn2178 and Asn2199. Cystine bridges form between Cys2208–Cys2229, Cys2243–Cys2356, and Cys2254–Cys2354. N-linked (GlcNAc...) asparagine glycans are attached at residues Asn2312 and Asn2351. The tract at residues Ile2410 to Arg2432 is disordered. Basic and acidic residues predominate over residues Ile2422–Arg2432. Residues Asn2439, Asn2457, Asn2466, Asn2504, Asn2586, Asn2611, Asn2650, Asn2677, and Asn2688 are each glycosylated (N-linked (GlcNAc...) asparagine). 4 6-Cys domains span residues Asn2448–Asn2663, Ile2666–Lys2827, Gly2831–Gly2979, and Glu2982–Gln3113. Cystine bridges form between Cys2452-Cys2476 and Cys2490-Cys2638. 3 disulfide bridges follow: Cys2670–Cys2706, Cys2720–Cys2804, and Cys2730–Cys2802. A glycan (N-linked (GlcNAc...) asparagine) is linked at Asn2952. Cys2986 and Cys3010 are disulfide-bonded. N-linked (GlcNAc...) asparagine glycosylation is found at Asn3011, Asn3016, Asn3066, Asn3093, and Asn3096. 2 disulfides stabilise this stretch: Cys3024-Cys3090 and Cys3035-Cys3088.

As to quaternary structure, heterodimer; heterodimerizes with PF45/48. In terms of processing, may be processed into a 310 kDa form as the parasite emerges from the host erythrocytes.

Its subcellular location is the cell surface. The protein localises to the cell membrane. Gametocyte surface protein required for male/female gamete fusion. Also required for male gamete exflagellation and interaction with host erythrocytes. The protein is Gametocyte surface protein P230 (PFS230) of Plasmodium falciparum (isolate 3D7).